The following is a 48-amino-acid chain: Large ribosomal subunit protein bL36c (48 aa).

Belongs to the bacterial ribosomal protein bL36 family.

It is found in the plastid. It localises to the chloroplast. The protein is Large ribosomal subunit protein bL36c of Rhodomonas salina (Cryptomonas salina).